The primary structure comprises 377 residues: tRNA 2-selenouridine synthase (377 aa).

In terms of domain architecture, Rhodanese spans 18 to 141; it reads ITRGVTLIDV…LRQEAMDATD (124 aa). Residue Cys101 is the S-selanylcysteine intermediate of the active site.

This sequence belongs to the SelU family. In terms of assembly, monomer.

The catalysed reaction is 5-methylaminomethyl-2-thiouridine(34) in tRNA + selenophosphate + (2E)-geranyl diphosphate + H2O + H(+) = 5-methylaminomethyl-2-selenouridine(34) in tRNA + (2E)-thiogeraniol + phosphate + diphosphate. It catalyses the reaction 5-methylaminomethyl-2-thiouridine(34) in tRNA + (2E)-geranyl diphosphate = 5-methylaminomethyl-S-(2E)-geranyl-thiouridine(34) in tRNA + diphosphate. The enzyme catalyses 5-methylaminomethyl-S-(2E)-geranyl-thiouridine(34) in tRNA + selenophosphate + H(+) = 5-methylaminomethyl-2-(Se-phospho)selenouridine(34) in tRNA + (2E)-thiogeraniol. It carries out the reaction 5-methylaminomethyl-2-(Se-phospho)selenouridine(34) in tRNA + H2O = 5-methylaminomethyl-2-selenouridine(34) in tRNA + phosphate. Its function is as follows. Involved in the post-transcriptional modification of the uridine at the wobble position (U34) of tRNA(Lys), tRNA(Glu) and tRNA(Gln). Catalyzes the conversion of 2-thiouridine (S2U-RNA) to 2-selenouridine (Se2U-RNA). Acts in a two-step process involving geranylation of 2-thiouridine (S2U) to S-geranyl-2-thiouridine (geS2U) and subsequent selenation of the latter derivative to 2-selenouridine (Se2U) in the tRNA chain. In Cronobacter sakazakii (strain ATCC BAA-894) (Enterobacter sakazakii), this protein is tRNA 2-selenouridine synthase.